The following is a 205-amino-acid chain: Thymidylate kinase (205 aa).

9-16 contacts ATP; the sequence is GPEGSGKT.

This sequence belongs to the thymidylate kinase family.

The enzyme catalyses dTMP + ATP = dTDP + ADP. Its function is as follows. Phosphorylation of dTMP to form dTDP in both de novo and salvage pathways of dTTP synthesis. This chain is Thymidylate kinase, found in Staphylococcus aureus (strain NCTC 8325 / PS 47).